The sequence spans 133 residues: MAKKANPKAKTQKKRKVVVESNGEAHVTASFNNIIISLTNKKGDVVAWSSAGKMGFRGSKKNTPYAAQLAAEDASKVAHEAGMRKVKVYVKGPGNGRESAIRAVHNSGIEVTEIIDITPLPHNGCRPPKRRRV.

Belongs to the universal ribosomal protein uS11 family. Part of the 30S ribosomal subunit. Interacts with proteins S7 and S18. Binds to IF-3.

Its function is as follows. Located on the platform of the 30S subunit, it bridges several disparate RNA helices of the 16S rRNA. Forms part of the Shine-Dalgarno cleft in the 70S ribosome. The protein is Small ribosomal subunit protein uS11 of Christiangramia forsetii (strain DSM 17595 / CGMCC 1.15422 / KT0803) (Gramella forsetii).